A 109-amino-acid chain; its full sequence is V-type proton ATPase 16 kDa proteolipid subunit (109 aa).

A helical membrane pass occupies residues 1–20 (VPVVMAGVLGIYGLIIAVII). Residues 21–39 (STGINPKAKPYYLFDGYAH) are Lumenal-facing. The chain crosses the membrane as a helical span at residues 40–61 (LSSGLACGLAGLAAGMAIGIVG). Topologically, residues 62–73 (DAGVRANAQQPK) are cytoplasmic. The chain crosses the membrane as a helical span at residues 74-99 (LFVGMILILIFAEALALYGLIVGIIL). The Lumenal segment spans residues 100 to 109 (SSRAGQSRAD).

It belongs to the V-ATPase proteolipid subunit family. V-ATPase is a heteromultimeric enzyme composed of a peripheral catalytic V1 complex (main components: subunits A, B, C, D, E, and F) attached to an integral membrane V0 proton pore complex (main component: the proteolipid protein; which is present as a hexamer that forms the proton-conducting pore). High expression in the mesocotyl tip of etiolated seedlings compared to the base.

Its subcellular location is the vacuole membrane. Its function is as follows. Proton-conducting pore forming subunit of the membrane integral V0 complex of vacuolar ATPase. V-ATPase is responsible for acidifying a variety of intracellular compartments in eukaryotic cells. The chain is V-type proton ATPase 16 kDa proteolipid subunit from Zea mays (Maize).